A 258-amino-acid polypeptide reads, in one-letter code: Phosphonates import ATP-binding protein PhnC 1 (258 aa).

The region spanning 2-246 (IEFKDVGLVY…TFEEIYGRSI (245 aa)) is the ABC transporter domain. ATP is bound at residue 35–42 (GLSGAGKS).

This sequence belongs to the ABC transporter superfamily. Phosphonates importer (TC 3.A.1.9.1) family. The complex is composed of two ATP-binding proteins (PhnC), two transmembrane proteins (PhnE) and a solute-binding protein (PhnD).

It is found in the cell membrane. It carries out the reaction phosphonate(out) + ATP + H2O = phosphonate(in) + ADP + phosphate + H(+). Its function is as follows. Part of the ABC transporter complex PhnCDE involved in phosphonates import. Responsible for energy coupling to the transport system. The chain is Phosphonates import ATP-binding protein PhnC 1 from Oceanobacillus iheyensis (strain DSM 14371 / CIP 107618 / JCM 11309 / KCTC 3954 / HTE831).